Here is a 318-residue protein sequence, read N- to C-terminus: Adenylate isopentenyltransferase 4 (318 aa).

12–19 (GATGSGKS) provides a ligand contact to ATP.

The protein belongs to the IPP transferase family. Requires Mg(2+) as cofactor. Expressed in immature seeds with highest expression in the chalazal endosperm.

The protein resides in the cytoplasm. It catalyses the reaction dimethylallyl diphosphate + ADP = N(6)-(dimethylallyl)adenosine 5'-diphosphate + diphosphate. The catalysed reaction is dimethylallyl diphosphate + ATP = N(6)-(dimethylallyl)adenosine 5'-triphosphate + diphosphate. Involved in cytokinin biosynthesis. Catalyzes the transfer of an isopentenyl group from dimethylallyl diphosphate (DMAPP) to ATP and ADP, but not to AMP. Has no DMAPP:tRNA isopentenyltransferase activity. This chain is Adenylate isopentenyltransferase 4 (IPT4), found in Arabidopsis thaliana (Mouse-ear cress).